Consider the following 91-residue polypeptide: Small ribosomal subunit protein bS16 (91 aa).

It belongs to the bacterial ribosomal protein bS16 family.

This is Small ribosomal subunit protein bS16 from Exiguobacterium sibiricum (strain DSM 17290 / CCUG 55495 / CIP 109462 / JCM 13490 / 255-15).